Here is a 124-residue protein sequence, read N- to C-terminus: Small ribosomal subunit protein uS12 (124 aa).

Aspartate 89 carries the 3-methylthioaspartic acid modification. Residues threonine 104–lysine 124 are disordered. Residues glutamine 112 to lysine 124 are compositionally biased toward basic residues.

This sequence belongs to the universal ribosomal protein uS12 family. In terms of assembly, part of the 30S ribosomal subunit. Contacts proteins S8 and S17. May interact with IF1 in the 30S initiation complex.

Functionally, with S4 and S5 plays an important role in translational accuracy. Interacts with and stabilizes bases of the 16S rRNA that are involved in tRNA selection in the A site and with the mRNA backbone. Located at the interface of the 30S and 50S subunits, it traverses the body of the 30S subunit contacting proteins on the other side and probably holding the rRNA structure together. The combined cluster of proteins S8, S12 and S17 appears to hold together the shoulder and platform of the 30S subunit. This Pseudothermotoga lettingae (strain ATCC BAA-301 / DSM 14385 / NBRC 107922 / TMO) (Thermotoga lettingae) protein is Small ribosomal subunit protein uS12.